Here is a 499-residue protein sequence, read N- to C-terminus: GTPase Der (499 aa).

EngA-type G domains lie at 3 to 166 (PVVA…LETL) and 213 to 386 (IKFA…QSAT). GTP contacts are provided by residues 9 to 16 (GRPNVGKS), 56 to 60 (DTGGI), 118 to 121 (NKTD), 219 to 226 (GRPNVGKS), 266 to 270 (DTAGV), and 331 to 334 (NKWD). Positions 387 to 471 (RRTSTAMLTR…PVRVEFQESA (85 aa)) constitute a KH-like domain.

The protein belongs to the TRAFAC class TrmE-Era-EngA-EngB-Septin-like GTPase superfamily. EngA (Der) GTPase family. In terms of assembly, associates with the 50S ribosomal subunit.

Functionally, GTPase that plays an essential role in the late steps of ribosome biogenesis. This is GTPase Der from Aeromonas hydrophila subsp. hydrophila (strain ATCC 7966 / DSM 30187 / BCRC 13018 / CCUG 14551 / JCM 1027 / KCTC 2358 / NCIMB 9240 / NCTC 8049).